The sequence spans 131 residues: Holo-[acyl-carrier-protein] synthase (131 aa).

Mg(2+) contacts are provided by Asp-8 and Glu-58.

Belongs to the P-Pant transferase superfamily. AcpS family. It depends on Mg(2+) as a cofactor.

Its subcellular location is the cytoplasm. It carries out the reaction apo-[ACP] + CoA = holo-[ACP] + adenosine 3',5'-bisphosphate + H(+). Its function is as follows. Transfers the 4'-phosphopantetheine moiety from coenzyme A to a Ser of acyl-carrier-protein. In Oenococcus oeni (strain ATCC BAA-331 / PSU-1), this protein is Holo-[acyl-carrier-protein] synthase.